The sequence spans 394 residues: Phosphopentomutase (394 aa).

Residues Asp13, Asp286, His291, Asp327, His328, and His339 each contribute to the Mn(2+) site.

Belongs to the phosphopentomutase family. It depends on Mn(2+) as a cofactor.

It localises to the cytoplasm. It carries out the reaction 2-deoxy-alpha-D-ribose 1-phosphate = 2-deoxy-D-ribose 5-phosphate. The enzyme catalyses alpha-D-ribose 1-phosphate = D-ribose 5-phosphate. The protein operates within carbohydrate degradation; 2-deoxy-D-ribose 1-phosphate degradation; D-glyceraldehyde 3-phosphate and acetaldehyde from 2-deoxy-alpha-D-ribose 1-phosphate: step 1/2. In terms of biological role, isomerase that catalyzes the conversion of deoxy-ribose 1-phosphate (dRib-1-P) and ribose 1-phosphate (Rib-1-P) to deoxy-ribose 5-phosphate (dRib-5-P) and ribose 5-phosphate (Rib-5-P), respectively. The sequence is that of Phosphopentomutase from Bacillus cereus (strain G9842).